A 174-amino-acid polypeptide reads, in one-letter code: Transcription antitermination protein NusB (174 aa).

This sequence belongs to the NusB family.

In terms of biological role, involved in transcription antitermination. Required for transcription of ribosomal RNA (rRNA) genes. Binds specifically to the boxA antiterminator sequence of the ribosomal RNA (rrn) operons. This is Transcription antitermination protein NusB from Rhodopseudomonas palustris (strain ATCC BAA-98 / CGA009).